The following is an 80-amino-acid chain: Acyl carrier protein (80 aa).

The Carrier domain occupies 4–79; that stretch reads EAILEKVRSI…DAVKYIEEKQ (76 aa). O-(pantetheine 4'-phosphoryl)serine is present on serine 39.

It belongs to the acyl carrier protein (ACP) family. 4'-phosphopantetheine is transferred from CoA to a specific serine of apo-ACP by AcpS. This modification is essential for activity because fatty acids are bound in thioester linkage to the sulfhydryl of the prosthetic group.

It is found in the cytoplasm. It functions in the pathway lipid metabolism; fatty acid biosynthesis. Its function is as follows. Carrier of the growing fatty acid chain in fatty acid biosynthesis. The chain is Acyl carrier protein from Prochlorococcus marinus (strain NATL1A).